Here is a 228-residue protein sequence, read N- to C-terminus: Phosphoglycolate phosphatase (228 aa).

Aspartate 9 (nucleophile) is an active-site residue. 2 residues coordinate Mg(2+): aspartate 9 and aspartate 11. Lysine 151 provides a ligand contact to substrate. Residues aspartate 174 and aspartate 178 each contribute to the Mg(2+) site.

Belongs to the archaeal SPP-like hydrolase family. The cofactor is Mg(2+).

The enzyme catalyses 2-phosphoglycolate + H2O = glycolate + phosphate. Catalyzes the dephosphorylation of 2-phosphoglycolate. The polypeptide is Phosphoglycolate phosphatase (Pyrobaculum aerophilum (strain ATCC 51768 / DSM 7523 / JCM 9630 / CIP 104966 / NBRC 100827 / IM2)).